The primary structure comprises 1100 residues: Lysylphosphatidylglycerol biosynthesis bifunctional protein LysX (1100 aa).

The interval Met-1–Asp-601 is phosphatidylglycerol lysyltransferase. 7 helical membrane passes run Val-18–Val-38, Phe-60–Ala-80, Ile-84–Leu-104, Phe-112–Leu-132, Leu-154–Gly-174, Val-206–Val-226, and Ala-314–Phe-332. A lysine--tRNA ligase region spans residues Gly-602–Arg-1100. The segment at residues Val-661–Ile-739 is a DNA-binding region (OB). Mg(2+) is bound by residues Asp-1012 and Glu-1019.

The protein in the N-terminal section; belongs to the LPG synthetase family. This sequence in the C-terminal section; belongs to the class-II aminoacyl-tRNA synthetase family. It depends on Mg(2+) as a cofactor.

The protein resides in the cell membrane. The catalysed reaction is tRNA(Lys) + L-lysine + ATP = L-lysyl-tRNA(Lys) + AMP + diphosphate. It carries out the reaction L-lysyl-tRNA(Lys) + a 1,2-diacyl-sn-glycero-3-phospho-(1'-sn-glycerol) = a 1,2-diacyl-sn-glycero-3-phospho-1'-(3'-O-L-lysyl)-sn-glycerol + tRNA(Lys). Catalyzes the production of L-lysyl-tRNA(Lys)transfer and the transfer of a lysyl group from L-lysyl-tRNA(Lys) to membrane-bound phosphatidylglycerol (PG), which produces lysylphosphatidylglycerol (LPG), one of the components of the bacterial membrane with a positive net charge. LPG synthesis contributes to the resistance to cationic antimicrobial peptides (CAMPs) and likely protects M.tuberculosis against the CAMPs produced by competiting microorganisms (bacteriocins). In fact, the modification of anionic phosphatidylglycerol with positively charged L-lysine results in repulsion of the peptides. This Mycolicibacterium vanbaalenii (strain DSM 7251 / JCM 13017 / BCRC 16820 / KCTC 9966 / NRRL B-24157 / PYR-1) (Mycobacterium vanbaalenii) protein is Lysylphosphatidylglycerol biosynthesis bifunctional protein LysX (lysX).